The chain runs to 186 residues: Dynactin subunit 3 (186 aa).

An N-acetylalanine modification is found at Ala-2.

The protein belongs to the dynactin subunit 3 family. As to quaternary structure, subunit of dynactin, a multiprotein complex part of a tripartite complex with dynein and a adapter, such as BICDL1, BICD2 or HOOK3. The dynactin complex is built around ACTR1A/ACTB filament and consists of an actin-related filament composed of a shoulder domain, a pointed end and a barbed end. Its length is defined by its flexible shoulder domain. The soulder is composed of 2 DCTN1 subunits, 4 DCTN2 and 2 DCTN3. The 4 DCNT2 (via N-terminus) bind the ACTR1A filament and act as molecular rulers to determine the length. The pointed end is important for binding dynein-dynactin cargo adapters. Consists of 4 subunits: ACTR10, DCNT4, DCTN5 and DCTN6. The barbed end is composed of a CAPZA1:CAPZB heterodimers, which binds ACTR1A/ACTB filament and dynactin and stabilizes dynactin.

It localises to the cytoplasm. The protein localises to the cytoskeleton. Its subcellular location is the microtubule organizing center. The protein resides in the centrosome. It is found in the chromosome. It localises to the centromere. The protein localises to the kinetochore. Its subcellular location is the spindle. The protein resides in the cleavage furrow. It is found in the midbody. Functionally, part of the dynactin complex that activates the molecular motor dynein for ultra-processive transport along microtubules. Together with dynein is involved in spindle assembly and cytokinesis. In Sus scrofa (Pig), this protein is Dynactin subunit 3.